We begin with the raw amino-acid sequence, 172 residues long: Large ribosomal subunit protein uL10 (172 aa).

It belongs to the universal ribosomal protein uL10 family. As to quaternary structure, part of the ribosomal stalk of the 50S ribosomal subunit. The N-terminus interacts with L11 and the large rRNA to form the base of the stalk. The C-terminus forms an elongated spine to which L12 dimers bind in a sequential fashion forming a multimeric L10(L12)X complex.

Functionally, forms part of the ribosomal stalk, playing a central role in the interaction of the ribosome with GTP-bound translation factors. The polypeptide is Large ribosomal subunit protein uL10 (Beijerinckia indica subsp. indica (strain ATCC 9039 / DSM 1715 / NCIMB 8712)).